Reading from the N-terminus, the 373-residue chain is Arfaptin-1 (373 aa).

The segment at 1–47 is disordered; sequence MAQESPKNSAAEIPVTSNGEVDDAHEHGYNRDLKHSLPSGLGLSETQ. Alanine 2 is subject to N-acetylalanine. Serine 5 bears the Phosphoserine mark. Positions 22 to 35 are enriched in basic and acidic residues; it reads DDAHEHGYNRDLKH. Residues serine 36, serine 39, serine 69, serine 79, and serine 132 each carry the phosphoserine modification. The 201-residue stretch at 153–353 folds into the AH domain; it reads TVDLELEAQI…NQKQLELTLK (201 aa). Threonine 361 is subject to Phosphothreonine.

Forms homodimers or heterodimers with ARFIP2. Interacts with non-myristoylated GTP-bound ARF3, but not to GDP-bound ARF3. Interacts with ARF1. Binds with lower affinity to ARF5 and with very little affinity to ARF6. Interacts with ARL1. Interacts with ATG9A. Post-translationally, phosphorylated by PRKD1; phosphorylation delocalizes ARFIP1 from the Golgi and disrupts its ability to inhibit the activity of ADP-ribosylation factor, an important component of the vesicle scission machinery.

The protein resides in the golgi apparatus. It is found in the trans-Golgi network membrane. Functionally, plays a role in controlling biogenesis of secretory granules at the trans-Golgi network. Mechanistically, binds ARF-GTP at the neck of a growing secretory granule precursor and forms a protective scaffold. Once the granule precursor has been completely loaded, active PRKD1 phosphorylates ARFIP1 and releases it from ARFs. In turn, ARFs induce fission. Through this mechanism, ensures proper secretory granule formation at the Golgi of pancreatic beta cells. In Mus musculus (Mouse), this protein is Arfaptin-1.